Here is a 382-residue protein sequence, read N- to C-terminus: Serine protease 23 (382 aa).

Residues M1 to P22 form the signal peptide. N-linked (GlcNAc...) asparagine glycosylation is present at N92. C159 and C175 are joined by a disulfide. H174 acts as the Charge relay system in catalysis. N-linked (GlcNAc...) asparagine glycosylation occurs at N206. Catalysis depends on charge relay system residues D239 and S315.

The protein belongs to the peptidase S1 family.

The protein localises to the secreted. The polypeptide is Serine protease 23 (Prss23) (Mus musculus (Mouse)).